The sequence spans 200 residues: NAD(P)H dehydrogenase (quinone) (200 aa).

Residues 4 to 191 (VLVLYYSSYG…GGARYQGALV (188 aa)) form the Flavodoxin-like domain. FMN contacts are provided by residues 10–15 (SSYGHI) and 79–81 (TRF). Tyr-12 is an NAD(+) binding site. Trp-99 lines the substrate pocket. FMN is bound by residues 114–120 (STASQHG) and His-135.

The protein belongs to the WrbA family. Requires FMN as cofactor.

The enzyme catalyses a quinone + NADH + H(+) = a quinol + NAD(+). It carries out the reaction a quinone + NADPH + H(+) = a quinol + NADP(+). In Rhodospirillum centenum (strain ATCC 51521 / SW), this protein is NAD(P)H dehydrogenase (quinone).